Here is a 318-residue protein sequence, read N- to C-terminus: Putative HTH-type transcriptional regulatory protein MJ1164 (318 aa).

The HTH cro/C1-type domain maps to 131 to 189 (LKEVREAMGISVGKLAEVAGVSRKAIYKYETQMANPSVDVALKIEEFLDVPLVKGIDLF). The segment at residues 142–161 (VGKLAEVAGVSRKAIYKYET) is a DNA-binding region (H-T-H motif).

This is Putative HTH-type transcriptional regulatory protein MJ1164 from Methanocaldococcus jannaschii (strain ATCC 43067 / DSM 2661 / JAL-1 / JCM 10045 / NBRC 100440) (Methanococcus jannaschii).